The primary structure comprises 317 residues: Phospho-N-acetylmuramoyl-pentapeptide-transferase (317 aa).

9 helical membrane passes run Leu-4–Pro-24, Thr-49–Val-69, Ala-76–Leu-96, Met-112–Ile-132, Leu-147–Asn-167, Phe-186–Leu-206, Ile-223–Ile-243, Leu-246–Phe-266, and Arg-297–Leu-317.

The protein belongs to the glycosyltransferase 4 family. MraY subfamily. Requires Mg(2+) as cofactor.

Its subcellular location is the cell membrane. The enzyme catalyses UDP-N-acetyl-alpha-D-muramoyl-L-alanyl-gamma-D-glutamyl-meso-2,6-diaminopimeloyl-D-alanyl-D-alanine + di-trans,octa-cis-undecaprenyl phosphate = di-trans,octa-cis-undecaprenyl diphospho-N-acetyl-alpha-D-muramoyl-L-alanyl-D-glutamyl-meso-2,6-diaminopimeloyl-D-alanyl-D-alanine + UMP. The protein operates within cell wall biogenesis; peptidoglycan biosynthesis. Catalyzes the initial step of the lipid cycle reactions in the biosynthesis of the cell wall peptidoglycan: transfers peptidoglycan precursor phospho-MurNAc-pentapeptide from UDP-MurNAc-pentapeptide onto the lipid carrier undecaprenyl phosphate, yielding undecaprenyl-pyrophosphoryl-MurNAc-pentapeptide, known as lipid I. This chain is Phospho-N-acetylmuramoyl-pentapeptide-transferase, found in Clostridium kluyveri (strain NBRC 12016).